Consider the following 1373-residue polypeptide: Inactive tyrosine-protein kinase PRAG1 (1373 aa).

Disordered stretches follow at residues 31 to 50 (AGHPKARANSLPAGTRLPAR) and 197 to 235 (TSSCPKGPRPCTSPQPLRESLPSEDDSDQRCSPSGDSEG). Residue Y238 is modified to Phosphotyrosine. Basic and acidic residues-rich tracts occupy residues 250-263 (DAVHSTEGSGRRGG) and 272-284 (QGPRTRPTEEEKQ). Residues 250 to 338 (DAVHSTEGSG…SGASSPFAPH (89 aa)) form a disordered region. A compositionally biased stretch (low complexity) spans 317-333 (SSSDGLSCGSSRSGASS). Phosphotyrosine is present on residues Y343 and Y391. Disordered regions lie at residues 376–448 (QPAS…NPAP) and 468–794 (IYLS…LPQK). The span at 419 to 438 (SQGQVWTGDTWIQKTPPSWS) shows a compositional bias: polar residues. Over residues 506 to 522 (RESHPHNVTENTAKEKP) the composition is skewed to basic and acidic residues. The segment covering 526-538 (PKLSKSSPGGSPV) has biased composition (low complexity). 2 stretches are compositionally biased toward polar residues: residues 568–578 (NLTSSCHTNGV) and 655–670 (TSGQNSKTNSGMSKSA). Residues S671 and S720 each carry the phosphoserine modification. Polar residues-rich tracts occupy residues 711–721 (VSQSSAESLSP) and 729–740 (SFTTGSTDSLAS). Phosphoserine is present on residues S757 and S802. Residues 804 to 823 (PDGFFWTQGSPKPRTASPKL) are disordered. A required for homodimerization region spans residues 911-954 (STQLQLHSLLSSISSKEGTYAKLGGLYTQSLARLVTKCEDLFMG). Positions 945–1296 (VTKCEDLFMG…EAKRVLQCLL (352 aa)) constitute a Protein kinase domain. A compositionally biased stretch (polar residues) spans 1041 to 1050 (LASPDTSSKD). Disordered stretches follow at residues 1041 to 1062 (LASPDTSSKDTAPAVSPQPPAQ) and 1138 to 1171 (QSSPGPSATPTVPTTTSRCPSAAPAATTACQGGP). A compositionally biased stretch (low complexity) spans 1139-1167 (SSPGPSATPTVPTTTSRCPSAAPAATTAC). Residues 1298–1373 (GPRRELVEQP…LQSLKLLQLL (76 aa)) form a required for homodimerization region.

It belongs to the protein kinase superfamily. As to quaternary structure, homodimer. Dimerization leads to the catalytic activation of CSK. Interacts (via C-terminus) with RND2. Interacts with CSK (via SH2 domain) in a Tyr-391 phosphorylation-dependent manner; this interaction potentiates kinase activity of CSK. Interacts with NOTCH1 intracellular domain (N1ICD). Forms a complex with PRAG1, N1ICD and MAML1, in a MAML1-dependent manner. Post-translationally, phosphorylated by CSK on Tyr-238, Tyr-343, and Tyr-391; Tyr-391 is a primary site of phosphorylation.

The protein resides in the cytoplasm. It is found in the nucleus. Its subcellular location is the cell junction. The protein localises to the focal adhesion. Catalytically inactive protein kinase that acts as a scaffold protein. Functions as an effector of the small GTPase RND2, which stimulates RhoA activity and inhibits NGF-induced neurite outgrowth. Promotes Src family kinase (SFK) signaling by regulating the subcellular localization of CSK, a negative regulator of these kinases, leading to the regulation of cell morphology and motility by a CSK-dependent mechanism. Acts as a critical coactivator of Notch signaling. The sequence is that of Inactive tyrosine-protein kinase PRAG1 from Mus musculus (Mouse).